The sequence spans 101 residues: Ubiquitin-related modifier 1 (101 aa).

Glycine 101 is modified (1-thioglycine). Glycine 101 is covalently cross-linked (Glycyl lysine isopeptide (Gly-Lys) (interchain with K-? in acceptor proteins)).

It belongs to the URM1 family. Post-translationally, C-terminal thiocarboxylation occurs in 2 steps, it is first acyl-adenylated (-COAMP) via the hesA/moeB/thiF part of UBA4, then thiocarboxylated (-COSH) via the rhodanese domain of UBA4.

The protein localises to the cytoplasm. The protein operates within tRNA modification; 5-methoxycarbonylmethyl-2-thiouridine-tRNA biosynthesis. Its function is as follows. Acts as a sulfur carrier required for 2-thiolation of mcm(5)S(2)U at tRNA wobble positions of cytosolic tRNA(Lys), tRNA(Glu) and tRNA(Gln). Serves as sulfur donor in tRNA 2-thiolation reaction by being thiocarboxylated (-COSH) at its C-terminus by the MOCS3 homolog UBA4. The sulfur is then transferred to tRNA to form 2-thiolation of mcm(5)S(2)U. Prior mcm(5) tRNA modification by the elongator complex is required for 2-thiolation. Also acts as a ubiquitin-like protein (UBL) that is covalently conjugated via an isopeptide bond to lysine residues of target proteins such as AHP1. The thiocarboxylated form serves as substrate for conjugation and oxidative stress specifically induces the formation of UBL-protein conjugates. The sequence is that of Ubiquitin-related modifier 1 from Candida albicans (strain SC5314 / ATCC MYA-2876) (Yeast).